Reading from the N-terminus, the 133-residue chain is Small ribosomal subunit protein uS8 (133 aa).

Belongs to the universal ribosomal protein uS8 family. As to quaternary structure, part of the 30S ribosomal subunit. Contacts proteins S5 and S12.

One of the primary rRNA binding proteins, it binds directly to 16S rRNA central domain where it helps coordinate assembly of the platform of the 30S subunit. The protein is Small ribosomal subunit protein uS8 of Chlorobaculum parvum (strain DSM 263 / NCIMB 8327) (Chlorobium vibrioforme subsp. thiosulfatophilum).